Here is a 1113-residue protein sequence, read N- to C-terminus: StAR-related lipid transfer protein 13 (1113 aa).

Met-1 carries the post-translational modification N-acetylmethionine. An SAM domain is found at 55–122 (QQEIEAKEAC…LNKCASMKLD (68 aa)). 2 disordered regions span residues 162–254 (LLPR…PTRA) and 307–346 (PNGD…VSTP). Over residues 177–188 (MRNTTSSESVLT) the composition is skewed to polar residues. Composition is skewed to low complexity over residues 197 to 213 (SIHS…SQPG) and 326 to 344 (SGKS…SGVS). Position 411 is a phosphoserine (Ser-411). Polar residues predominate over residues 536–549 (FEGNSVSEGRTTPS). Residues 536–580 (FEGNSVSEGRTTPSDVERDVTSLNESEPPGVRDRRDSGVGASLTR) are disordered. Residues 663-868 (VPLIVHVQRT…HMIMECDRLF (206 aa)) enclose the Rho-GAP domain. Residues 899-1107 (LEESGATFHT…RNSFQPLIAE (209 aa)) enclose the START domain.

In terms of assembly, homodimer. Interacts with TAX1BP1. As to expression, ubiquitously expressed. Underexpressed in hepatocellular carcinoma cells and some breast cancer cell lines.

Its subcellular location is the cytoplasm. The protein resides in the membrane. It localises to the mitochondrion membrane. The protein localises to the lipid droplet. In terms of biological role, GTPase-activating protein for RhoA, and perhaps for Cdc42. May be involved in regulation of cytoskeletal reorganization, cell proliferation and cell motility. Acts a tumor suppressor in hepatocellular carcinoma cells. This chain is StAR-related lipid transfer protein 13 (STARD13), found in Homo sapiens (Human).